We begin with the raw amino-acid sequence, 300 residues long: N-acetylmuramic acid 6-phosphate etherase 1 (300 aa).

In terms of domain architecture, SIS spans 57-220 (IATAFAQGGR…TTGAMIKSGK (164 aa)). The Proton donor role is filled by Glu85. Residue Glu116 is part of the active site.

The protein belongs to the GCKR-like family. MurNAc-6-P etherase subfamily. In terms of assembly, homodimer.

It carries out the reaction N-acetyl-D-muramate 6-phosphate + H2O = N-acetyl-D-glucosamine 6-phosphate + (R)-lactate. The protein operates within amino-sugar metabolism; 1,6-anhydro-N-acetylmuramate degradation. Its pathway is amino-sugar metabolism; N-acetylmuramate degradation. It functions in the pathway cell wall biogenesis; peptidoglycan recycling. Functionally, specifically catalyzes the cleavage of the D-lactyl ether substituent of MurNAc 6-phosphate, producing GlcNAc 6-phosphate and D-lactate. Together with AnmK, is also required for the utilization of anhydro-N-acetylmuramic acid (anhMurNAc) either imported from the medium or derived from its own cell wall murein, and thus plays a role in cell wall recycling. The chain is N-acetylmuramic acid 6-phosphate etherase 1 from Vibrio cholerae serotype O1 (strain ATCC 39315 / El Tor Inaba N16961).